A 189-amino-acid chain; its full sequence is Elongation factor P (189 aa).

This sequence belongs to the elongation factor P family.

It is found in the cytoplasm. It participates in protein biosynthesis; polypeptide chain elongation. Functionally, involved in peptide bond synthesis. Stimulates efficient translation and peptide-bond synthesis on native or reconstituted 70S ribosomes in vitro. Probably functions indirectly by altering the affinity of the ribosome for aminoacyl-tRNA, thus increasing their reactivity as acceptors for peptidyl transferase. This chain is Elongation factor P, found in Aster yellows witches'-broom phytoplasma (strain AYWB).